The sequence spans 483 residues: tRNA (guanine(37)-N(1))-methyltransferase (483 aa).

Residues 1 to 24 (MEEAATLQSLSISSSSPFPNNSSP) are disordered. The segment covering 9 to 24 (SLSISSSSPFPNNSSP) has biased composition (low complexity). S-adenosyl-L-methionine is bound by residues histidine 252, 290 to 291 (DL), and asparagine 379.

The protein belongs to the class I-like SAM-binding methyltransferase superfamily. TRM5/TYW2 family. As to quaternary structure, monomer.

The protein localises to the mitochondrion matrix. Its subcellular location is the nucleus. The protein resides in the cytoplasm. It carries out the reaction guanosine(37) in tRNA + S-adenosyl-L-methionine = N(1)-methylguanosine(37) in tRNA + S-adenosyl-L-homocysteine + H(+). In terms of biological role, specifically methylates the N1 position of guanosine-37 in various cytoplasmic and mitochondrial tRNAs. Methylation is not dependent on the nature of the nucleoside 5' of the target nucleoside. This is the first step in the biosynthesis of wybutosine (yW), a modified base adjacent to the anticodon of tRNAs and required for accurate decoding. This is tRNA (guanine(37)-N(1))-methyltransferase from Ajellomyces capsulatus (strain G186AR / H82 / ATCC MYA-2454 / RMSCC 2432) (Darling's disease fungus).